We begin with the raw amino-acid sequence, 133 residues long: Protein PROTON GRADIENT REGULATION 5, chloroplastic (133 aa).

Residues 1 to 60 (MAAASISAIGCNQTLIGTSFYGGWGSSISGEDYQTMLSKTVAPPQQARVSRKAIRAVPMM) constitute a chloroplast transit peptide.

This sequence belongs to the PGR5 family. Interacts with PGRL1A and PGRL1B. In terms of processing, disulfide bonds; Cys-11 and Cys-105 are probably involved in the formation of disulfide bridges with 'Cys-300' and 'Cys-303' of PGRL1A. 'Cys-272' and 'Cys-275' of PGRL1A may also be used to form the disulfide bridges, but in this case the cyclic electron flow is lost.

It localises to the plastid. The protein resides in the chloroplast thylakoid membrane. In terms of biological role, critical for growth under fluctuating-light conditions. Involved in the regulation of the cyclic electron flow (CEF) around Photosystem I. Essential for the reduction of PGRL1A by ferredoxin and for photoprotection. Contributes to maximize photosynthesis efficiency after a long dark adaptation via the regulation of non-photochemical quenching (NPQ); acts independently from DLDG1. Promotes the induction of steady-state proton motive force (pmf) and energy-dependent quenching (qE). This Arabidopsis thaliana (Mouse-ear cress) protein is Protein PROTON GRADIENT REGULATION 5, chloroplastic.